A 239-amino-acid polypeptide reads, in one-letter code: Fatty acid metabolism regulator protein (239 aa).

Residues 6 to 74 (QSPAGFAEEY…HGKPTKINNF (69 aa)) form the HTH gntR-type domain. The segment at residues 34-53 (ERELSELIGVTRTTLREVLQ) is a DNA-binding region (H-T-H motif).

As to quaternary structure, homodimer.

The protein resides in the cytoplasm. In terms of biological role, multifunctional regulator of fatty acid metabolism. The chain is Fatty acid metabolism regulator protein from Pectobacterium carotovorum subsp. carotovorum (strain PC1).